Here is a 544-residue protein sequence, read N- to C-terminus: Prolyl 4-hydroxylase subunit alpha-3 (544 aa).

The first 19 residues, 1–19 (MGPGARLAALLAVLALGTG), serve as a signal peptide directing secretion. The stretch at 107 to 131 (LEASENIRALKDGYEKVEQDLPAFE) forms a coiled coil. The TPR repeat unit spans residues 227–260 (EDALDHLAFAYFRAGNVSCALSLSREFLLYSPDN). Asn242 carries N-linked (GlcNAc...) asparagine glycosylation. A Fe2OG dioxygenase domain is found at 422–529 (YAEYLQVVNY…KWVANKWIHE (108 aa)). 2 residues coordinate Fe cation: His440 and Asp442. Residue Asn482 is glycosylated (N-linked (GlcNAc...) asparagine). A Fe cation-binding site is contributed by His510. Lys520 serves as a coordination point for 2-oxoglutarate.

Belongs to the P4HA family. In terms of assembly, heterotetramer of two alpha-3 chains and two beta chains (the beta chain is the multi-functional PDI). Fe(2+) is required as a cofactor. It depends on L-ascorbate as a cofactor. In terms of processing, N-glycosylation plays no role in the catalytic activity. As to expression, highly expressed in placenta, liver and fetal skin. Weakly expressed in fetal epiphyseal cartilage, fetal liver, fibroblast, lung and skeletal muscle. Expressed also in fibrous cap of carotid atherosclerotic lesions.

It is found in the endoplasmic reticulum lumen. It carries out the reaction L-prolyl-[collagen] + 2-oxoglutarate + O2 = trans-4-hydroxy-L-prolyl-[collagen] + succinate + CO2. Functionally, catalyzes the post-translational formation of 4-hydroxyproline in -Xaa-Pro-Gly- sequences in collagens and other proteins. This is Prolyl 4-hydroxylase subunit alpha-3 (P4HA3) from Homo sapiens (Human).